The sequence spans 82 residues: UPF0180 protein BT9727_1277 (82 aa).

The protein belongs to the UPF0180 family.

In Bacillus thuringiensis subsp. konkukian (strain 97-27), this protein is UPF0180 protein BT9727_1277.